Consider the following 310-residue polypeptide: Ribosomal RNA small subunit methyltransferase H (310 aa).

S-adenosyl-L-methionine is bound by residues 32-34 (AGH), Asp-52, Phe-79, Asp-100, and Gln-107.

It belongs to the methyltransferase superfamily. RsmH family.

Its subcellular location is the cytoplasm. The catalysed reaction is cytidine(1402) in 16S rRNA + S-adenosyl-L-methionine = N(4)-methylcytidine(1402) in 16S rRNA + S-adenosyl-L-homocysteine + H(+). Its function is as follows. Specifically methylates the N4 position of cytidine in position 1402 (C1402) of 16S rRNA. The sequence is that of Ribosomal RNA small subunit methyltransferase H from Bacillus pumilus (strain SAFR-032).